A 902-amino-acid polypeptide reads, in one-letter code: MNLLTKILRMGEGRKLKALQRTVEEVSAREPEVRGLSDAALRARTDEFKERLQGGETLDDLLPEAFAVVREVARRTLGLRPFDVQVMGGVVLHQGKIAEMKTGEGKTLVATMPVYLNALAGRGVHVVTVNDYLARRDAEWMGPIYEFLGLEVGVIQESMGFEERKKAYAADITYGTNAQFGFDYLRDNIATSPDQLVQRELHYAIVDEVDSILIDEARTPLIISGLPESAADLYYRFAAIVPRLREGEDYEVDEKKRQVAPTEQGVAKVEKALGIPNLYDGVNTNLVNHLIQALRAHTLFRRDREYIVRDGQVFIVDEFTGRVLEGRRYSEGLHQAIEAKEGVEIKEENQTVATITIQNYFRQYEKLAGMTGTAATEADEFMHTYKMEVVSIPTHRPMIRVDRDDLVYRTKKAKYAAVIDDIVERHRKGQPVLVGTVSVEVSEHLSALLKRRGIKHNVLNAKHHEREAEIIAEAGKKGAVTIATNMAGRGTDIKLGGSDESGGGEEWTEEHERLASEIMEKYPTITRDMLEGRSLESLEVVNLGGLYVLGTERHEARRIDNQLRGRSGRQGDPGESRFYLSFEDDLLRLFGGQRMQSLMERIGLEEDEAIEAGMVSNSVRRAQEQVESRNFQMRKRILEYDDVLNKQREVIYAIRREILMGEKVDTMSYVEDVLTDVISRYASEDVYPEEWDLEGLATELNRFYPCQVDFSSLDIESATADQVREMVLEDARERLEERRAEWEERTAELERRGLARADGLDSFEEAERRTLLSVVDSRWREHLYEMEYLREGIGWRGLGQRDPLVEYKREGYDLFVEMERGIREDYVTYIYRIENLKLSETDVERLSYSGGGEEPNQRPKSPRRRSERKIGPNEPCPCGSGKKFKKCHGRVGAPPLPTSQSQ.

Residues Q85, 103-107, and D492 each bind ATP; that span reads GEGKT. The disordered stretch occupies residues 846–902; the sequence is LSYSGGGEEPNQRPKSPRRRSERKIGPNEPCPCGSGKKFKKCHGRVGAPPLPTSQSQ. The Zn(2+) site is built by C876, C878, C887, and H888.

The protein belongs to the SecA family. In terms of assembly, monomer and homodimer. Part of the essential Sec protein translocation apparatus which comprises SecA, SecYEG and auxiliary proteins SecDF. Other proteins may also be involved. Requires Zn(2+) as cofactor.

The protein localises to the cell membrane. It is found in the cytoplasm. The enzyme catalyses ATP + H2O + cellular proteinSide 1 = ADP + phosphate + cellular proteinSide 2.. Functionally, part of the Sec protein translocase complex. Interacts with the SecYEG preprotein conducting channel. Has a central role in coupling the hydrolysis of ATP to the transfer of proteins into and across the cell membrane, serving as an ATP-driven molecular motor driving the stepwise translocation of polypeptide chains across the membrane. The sequence is that of Protein translocase subunit SecA from Rubrobacter xylanophilus (strain DSM 9941 / JCM 11954 / NBRC 16129 / PRD-1).